Reading from the N-terminus, the 161-residue chain is Phosphopantetheine adenylyltransferase (161 aa).

Residue S11 participates in substrate binding. ATP-binding positions include 11–12 (SF) and H19. Residues K43, L75, and R89 each contribute to the substrate site. ATP-binding positions include 90 to 92 (GLR), E100, and 125 to 131 (YSFISSS).

Belongs to the bacterial CoaD family. In terms of assembly, homohexamer. It depends on Mg(2+) as a cofactor.

It localises to the cytoplasm. It carries out the reaction (R)-4'-phosphopantetheine + ATP + H(+) = 3'-dephospho-CoA + diphosphate. It participates in cofactor biosynthesis; coenzyme A biosynthesis; CoA from (R)-pantothenate: step 4/5. Functionally, reversibly transfers an adenylyl group from ATP to 4'-phosphopantetheine, yielding dephospho-CoA (dPCoA) and pyrophosphate. This chain is Phosphopantetheine adenylyltransferase, found in Staphylococcus haemolyticus (strain JCSC1435).